Here is a 236-residue protein sequence, read N- to C-terminus: UPF0502 protein BamMC406_5439 (236 aa).

This sequence belongs to the UPF0502 family.

In Burkholderia ambifaria (strain MC40-6), this protein is UPF0502 protein BamMC406_5439.